Consider the following 294-residue polypeptide: MSEKIRKTLSLIESQQLAQDVWHILQEQHFKGMLPYFTVEHLCTKHQLTPQQLALKLLPIAAAYSLAPISQFHVGAIAIGQRGAYYFGANLEFASTHIQQTVHAEQSAISHAWMNHESAITDVVVNYTPCGHCRQFMNELKTAPQLKIHLPHSQNNLLHSYLPDAFGPADLDIQHFLLDAQNNQLTYETQDPVMLTALECANAAHAPYSKSYHGIAIETKDKQIYRGSYAENAAFNPSLPALQVALNHLLLSGDTLQNIQRIVMIEKANHLCYRHMAEDLVANLVDIPLDYIAL.

CMP/dCMP-type deaminase domains follow at residues 49-169 and 188-294; these read TPQQ…FGPA and ETQD…YIAL. 90–92 provides a ligand contact to substrate; sequence NLE. Position 103 (His103) interacts with Zn(2+). Glu105 functions as the Proton donor in the catalytic mechanism. Residues Cys130 and Cys133 each contribute to the Zn(2+) site.

The protein belongs to the cytidine and deoxycytidylate deaminase family. Homodimer. Zn(2+) serves as cofactor.

It carries out the reaction cytidine + H2O + H(+) = uridine + NH4(+). It catalyses the reaction 2'-deoxycytidine + H2O + H(+) = 2'-deoxyuridine + NH4(+). Functionally, this enzyme scavenges exogenous and endogenous cytidine and 2'-deoxycytidine for UMP synthesis. The sequence is that of Cytidine deaminase from Pasteurella multocida (strain Pm70).